The sequence spans 338 residues: Envelope glycoprotein K (338 aa).

An N-terminal signal peptide occupies residues 1–30; the sequence is MLAVRSLQHLTTVIFITAYGLVLAWYIVFG. The Extracellular segment spans residues 31 to 121; it reads ASPLHRCIYA…VNCLEALWDT (91 aa). The involved in fusion stretch occupies residues 31 to 121; that stretch reads ASPLHRCIYA…VNCLEALWDT (91 aa). Residues Asn48 and Asn58 are each glycosylated (N-linked (GlcNAc...) asparagine; by host). The helical transmembrane segment at 122–140 threads the bilayer; it reads QMRLVVVGWFLYLAFVALH. The Cytoplasmic portion of the chain corresponds to 141 to 212; that stretch reads QRRCMFGVVS…DPVTFLYHRP (72 aa). A helical membrane pass occupies residues 213-233; it reads AIGVIVGCELLLRFVALGLIV. Residues 234 to 243 are Extracellular-facing; that stretch reads GTALISRGAC. A helical membrane pass occupies residues 244–264; that stretch reads AITHPLFLTITTWCFVSIIAL. The Cytoplasmic segment spans residues 265 to 301; the sequence is TELYFILRRGSAPKNAEPAAPRGRSKGWSGVCGRCCS. An interaction with UL20 region spans residues 265–301; the sequence is TELYFILRRGSAPKNAEPAAPRGRSKGWSGVCGRCCS. A helical transmembrane segment spans residues 302-322; the sequence is IILSGIAVRLCYIAVVAGVVL. Residues 323-338 lie on the Extracellular side of the membrane; that stretch reads VALRYEQEIQRRLFDL.

It belongs to the alphaherpesvirinae glycoprotein K family. Interacts (via UL20 interaction region) with protein UL20 (via N-terminus); this interaction probably plays a role in the coordinate transport of protein UL20 and gK to the trans-Golgi network (TGN), and is required for the cell surface expression of gK. Post-translationally, N-glycosylated.

The protein resides in the host cell membrane. It localises to the host endosome membrane. Its subcellular location is the host Golgi apparatus membrane. In terms of biological role, glycoprotein that probably modulates membrane fusion events during secondary envelopment of cytoplasmic capsids that bud into specific trans-Golgi network (TGN)-derived membranes. Also plays a role, together with gB, in virus-induced cell-to-cell fusion (syncytia formation). Seems to block fusion of virions with infected-cell membranes. This is Envelope glycoprotein K (gK) from Human herpesvirus 2 (strain HG52) (HHV-2).